The following is a 175-amino-acid chain: T-cell surface glycoprotein CD3 epsilon chain (175 aa).

An N-terminal signal peptide occupies residues 1-21; it reads MRCEVPLPLLGLLLCVVGAAA. Over 22-100 the chain is Extracellular; sequence QGGQEEFAVE…VCANCEELDT (79 aa). Residues 101–121 form a helical membrane-spanning segment; it reads FTVVGIIAADLLITLGVLILV. Topologically, residues 122–175 are cytoplasmic; it reads YYFSKNKKGQSRAAAGSRPRAQKMRRPPPVPNPDYEPIRKGQRDVYAGLEHRGF. The segment at 133-163 is disordered; the sequence is RAAAGSRPRAQKMRRPPPVPNPDYEPIRKGQ. The ITAM domain occupies 146–173; the sequence is RRPPPVPNPDYEPIRKGQRDVYAGLEHR.

As to quaternary structure, the TCR/CD3 complex of T-lymphocytes consists of either a TCR alpha/beta or TCR gamma/delta heterodimer coexpressed at the cell surface with the invariant subunits of CD3 labeled gamma, delta, epsilon, zeta, and eta.

Its subcellular location is the cell membrane. Its function is as follows. The CD3 complex mediates signal transduction, resulting in T-cell activation and proliferation. Required for normal immune responses. The polypeptide is T-cell surface glycoprotein CD3 epsilon chain (CD3E) (Gallus gallus (Chicken)).